A 763-amino-acid polypeptide reads, in one-letter code: 5-methyltetrahydropteroyltriglutamate--homocysteine methyltransferase (763 aa).

Residues 16-19 (RELK) and Lys-114 each bind 5-methyltetrahydropteroyltri-L-glutamate. L-homocysteine-binding positions include 438-440 (IGS) and Glu-491. L-methionine is bound by residues 438–440 (IGS) and Glu-491. Residues 522-523 (RC) and Trp-568 each bind 5-methyltetrahydropteroyltri-L-glutamate. Residue Asp-606 coordinates L-homocysteine. Residue Asp-606 participates in L-methionine binding. Glu-612 serves as a coordination point for 5-methyltetrahydropteroyltri-L-glutamate. His-648, Cys-650, and Glu-672 together coordinate Zn(2+). The Proton donor role is filled by His-701. Cys-733 provides a ligand contact to Zn(2+).

Belongs to the vitamin-B12 independent methionine synthase family. Requires Zn(2+) as cofactor.

It catalyses the reaction 5-methyltetrahydropteroyltri-L-glutamate + L-homocysteine = tetrahydropteroyltri-L-glutamate + L-methionine. It participates in amino-acid biosynthesis; L-methionine biosynthesis via de novo pathway; L-methionine from L-homocysteine (MetE route): step 1/1. Functionally, catalyzes the transfer of a methyl group from 5-methyltetrahydrofolate to homocysteine resulting in methionine formation. This Parvibaculum lavamentivorans (strain DS-1 / DSM 13023 / NCIMB 13966) protein is 5-methyltetrahydropteroyltriglutamate--homocysteine methyltransferase.